The chain runs to 621 residues: Zinc metalloproteinase-disintegrin-like TSV-DM (621 aa).

A signal peptide spans 1–20 (MIQVLLVTICLAVFPYQGSS). A propeptide spanning residues 21–191 (IILESGNVND…EASQSNLTPE (171 aa)) is cleaved from the precursor. A Pyrrolidone carboxylic acid modification is found at Gln-192. The region spanning 200–396 (KYVKFFLVAD…NMPQCILKKP (197 aa)) is the Peptidase M12B domain. The N-linked (GlcNAc...) asparagine glycan is linked to Asn-219. Disulfide bonds link Cys-311–Cys-391, Cys-351–Cys-375, and Cys-353–Cys-358. His-336 lines the Zn(2+) pocket. The active site involves Glu-337. The Zn(2+) site is built by His-340 and His-346. Positions 404–489 (PPVCGNYFVE…AECTDRFQRN (86 aa)) constitute a Disintegrin domain. 6 residues coordinate Ca(2+): Val-406, Asn-409, Phe-411, Glu-413, Glu-416, and Asp-419. Disulfide bonds link Cys-407–Cys-436, Cys-418–Cys-431, Cys-420–Cys-426, Cys-430–Cys-453, Cys-444–Cys-450, Cys-449–Cys-475, Cys-462–Cys-482, Cys-469–Cys-500, Cys-493–Cys-505, Cys-512–Cys-562, Cys-527–Cys-573, Cys-540–Cys-550, Cys-557–Cys-599, and Cys-593–Cys-605. Positions 468 to 470 (ECD) match the D/ECD-tripeptide motif. Positions 470, 471, 473, 484, and 485 each coordinate Ca(2+). A glycan (N-linked (GlcNAc...) asparagine) is linked at Asn-502.

The protein belongs to the venom metalloproteinase (M12B) family. P-III subfamily. P-IIIc sub-subfamily. Homodimer; disulfide-linked. Zn(2+) serves as cofactor. The N-terminus is blocked. In terms of tissue distribution, expressed by the venom gland.

It is found in the secreted. With respect to regulation, inhibited by EDTA and DTT, and partially inhibited by EGTA, but not inhibited by PMSF and NEM. Its function is as follows. Snake venom zinc metalloprotease that hydrolyzes the alpha-chain (FGA) and more slowly the beta-chain (FGB) of fibrinogen. Inhibits cell proliferation and induces cell morphologic changes transiently on human umbilical vein endothelial cells. In Trimeresurus stejnegeri (Chinese green tree viper), this protein is Zinc metalloproteinase-disintegrin-like TSV-DM.